The sequence spans 502 residues: 4,4'-diapophytoene desaturase (4,4'-diaponeurosporene-forming) (502 aa).

Residue 5–17 (VIGAGVTGLAAAA) participates in FAD binding.

Belongs to the carotenoid/retinoid oxidoreductase family. CrtN subfamily.

It carries out the reaction 15-cis-4,4'-diapophytoene + 3 FAD + 3 H(+) = all-trans-4,4'-diaponeurosporene + 3 FADH2. The protein operates within carotenoid biosynthesis; staphyloxanthin biosynthesis; staphyloxanthin from farnesyl diphosphate: step 2/5. Functionally, involved in the biosynthesis of the yellow-orange carotenoid staphyloxanthin, which plays a role in the virulence via its protective function against oxidative stress. Catalyzes three successive dehydrogenation reactions that lead to the introduction of three double bonds into 4,4'-diapophytoene (dehydrosqualene), with 4,4'-diapophytofluene and 4,4'-diapo-zeta-carotene as intermediates, and 4,4'-diaponeurosporene (the major deep-yellow pigment in staphylococci strains) as the end product. The chain is 4,4'-diapophytoene desaturase (4,4'-diaponeurosporene-forming) from Staphylococcus aureus (strain COL).